The chain runs to 300 residues: ATP-dependent (S)-NAD(P)H-hydrate dehydratase (300 aa).

In terms of domain architecture, YjeF C-terminal spans 7 to 289 (IEARLKSIIP…ESIPSVFDQV (283 aa)). Residues Gly107 and 160 to 166 (NVMEYRR) each bind (6S)-NADPHX. ATP contacts are provided by residues 194–198 (KGQVD) and 213–222 (GSPRRCGGQG). Asp223 is a (6S)-NADPHX binding site.

Belongs to the NnrD/CARKD family. Mg(2+) serves as cofactor.

It carries out the reaction (6S)-NADHX + ATP = ADP + phosphate + NADH + H(+). The enzyme catalyses (6S)-NADPHX + ATP = ADP + phosphate + NADPH + H(+). Functionally, catalyzes the dehydration of the S-form of NAD(P)HX at the expense of ATP, which is converted to ADP. Together with NAD(P)HX epimerase, which catalyzes the epimerization of the S- and R-forms, the enzyme allows the repair of both epimers of NAD(P)HX, a damaged form of NAD(P)H that is a result of enzymatic or heat-dependent hydration. The sequence is that of ATP-dependent (S)-NAD(P)H-hydrate dehydratase from Entamoeba histolytica (strain ATCC 30459 / HM-1:IMSS / ABRM).